A 500-amino-acid polypeptide reads, in one-letter code: Lysine--tRNA ligase (500 aa).

Positions 410 and 417 each coordinate Mg(2+).

Belongs to the class-II aminoacyl-tRNA synthetase family. Homodimer. The cofactor is Mg(2+).

The protein localises to the cytoplasm. It carries out the reaction tRNA(Lys) + L-lysine + ATP = L-lysyl-tRNA(Lys) + AMP + diphosphate. This Shewanella piezotolerans (strain WP3 / JCM 13877) protein is Lysine--tRNA ligase.